Consider the following 349-residue polypeptide: Phosphoribosylformylglycinamidine cyclo-ligase (349 aa).

The protein belongs to the AIR synthase family.

The protein localises to the cytoplasm. It catalyses the reaction 2-formamido-N(1)-(5-O-phospho-beta-D-ribosyl)acetamidine + ATP = 5-amino-1-(5-phospho-beta-D-ribosyl)imidazole + ADP + phosphate + H(+). The protein operates within purine metabolism; IMP biosynthesis via de novo pathway; 5-amino-1-(5-phospho-D-ribosyl)imidazole from N(2)-formyl-N(1)-(5-phospho-D-ribosyl)glycinamide: step 2/2. This is Phosphoribosylformylglycinamidine cyclo-ligase from Lactobacillus delbrueckii subsp. bulgaricus (strain ATCC 11842 / DSM 20081 / BCRC 10696 / JCM 1002 / NBRC 13953 / NCIMB 11778 / NCTC 12712 / WDCM 00102 / Lb 14).